A 320-amino-acid chain; its full sequence is Ferrochelatase (320 aa).

Fe cation contacts are provided by H194 and E275.

This sequence belongs to the ferrochelatase family.

Its subcellular location is the cytoplasm. It carries out the reaction heme b + 2 H(+) = protoporphyrin IX + Fe(2+). The protein operates within porphyrin-containing compound metabolism; protoheme biosynthesis; protoheme from protoporphyrin-IX: step 1/1. Its function is as follows. Catalyzes the ferrous insertion into protoporphyrin IX. The chain is Ferrochelatase from Enterobacter sp. (strain 638).